Reading from the N-terminus, the 198-residue chain is Myb-related protein 340 (198 aa).

2 consecutive HTH myb-type domains span residues 10–62 and 63–117; these read DVEV…LNYL and RPDV…IQKH. DNA-binding regions (H-T-H motif) lie at residues 38–62 and 90–113; these read WNTIARSAGLKRTGKSCRLRWLNYL and WSKIAKHLPGRTDNEIKNYWNRTR.

As to expression, expressed only in flowers.

It localises to the nucleus. Its function is as follows. Transcription factor. In Antirrhinum majus (Garden snapdragon), this protein is Myb-related protein 340.